Here is a 678-residue protein sequence, read N- to C-terminus: uncharacterized protein (678 aa).

Helical transmembrane passes span 228–250, 263–285, 300–322, 334–356, 361–380, 387–405, 420–439, and 455–477; these read FFVILILGAVITLLLSLAIFSFL, LAMWWLPAILGVLSVCSVFVATQ, STGALPLLALIVKHSIAIALSCV, MLHNGFIGGYLASTLCLLYAVLF, FSLSAVFALEYALSLVFFSA, RIMLAMMFLLFAPFLYAYL, NVFFALGCVPFMLFMLTLFF, and NLLLSGALLTVLVINGVLWSVSL. Residues 653 to 678 form a disordered region; that stretch reads PSSQGVHATPEKNACIRDETVPNLQE.

It localises to the cell membrane. This is an uncharacterized protein from Treponema pallidum (strain Nichols).